A 102-amino-acid chain; its full sequence is Small ribosomal subunit protein uS10 (102 aa).

Belongs to the universal ribosomal protein uS10 family. Part of the 30S ribosomal subunit.

Involved in the binding of tRNA to the ribosomes. The chain is Small ribosomal subunit protein uS10 from Acidiphilium cryptum (strain JF-5).